The following is a 396-amino-acid chain: Ubiquitin-like modifier-activating enzyme 5 (396 aa).

Residues Gly76, Asp97, Lys120, Asn143, and Asn177 each coordinate ATP. The Zn(2+) site is built by Cys219 and Cys222. Cys243 acts as the Glycyl thioester intermediate in catalysis. Zn(2+)-binding residues include Cys296 and Cys301.

It belongs to the ubiquitin-activating E1 family. UBA5 subfamily.

Functionally, E1-like enzyme which activates UFM1. In Drosophila ananassae (Fruit fly), this protein is Ubiquitin-like modifier-activating enzyme 5.